The sequence spans 285 residues: 2-methoxy-6-polyprenyl-1,4-benzoquinol methylase, mitochondrial (285 aa).

The transit peptide at 1-30 (MKGATNLFKSMRKPTNVGNFRQFSVNQVNS) directs the protein to the mitochondrion. S-adenosyl-L-methionine-binding positions include Thr106, Asp126, 156 to 157 (NA), and Ser173.

The protein belongs to the class I-like SAM-binding methyltransferase superfamily. MenG/UbiE family. As to quaternary structure, component of a multi-subunit COQ enzyme complex.

The protein resides in the mitochondrion inner membrane. It carries out the reaction a 2-methoxy-6-(all-trans-polyprenyl)benzene-1,4-diol + S-adenosyl-L-methionine = a 5-methoxy-2-methyl-3-(all-trans-polyprenyl)benzene-1,4-diol + S-adenosyl-L-homocysteine + H(+). It functions in the pathway cofactor biosynthesis; ubiquinone biosynthesis. Its function is as follows. Methyltransferase required for the conversion of 2-polyprenyl-6-methoxy-1,4-benzoquinol (DDMQH2) to 2-polyprenyl-3-methyl-6-methoxy-1,4-benzoquinol (DMQH2). This chain is 2-methoxy-6-polyprenyl-1,4-benzoquinol methylase, mitochondrial, found in Caenorhabditis elegans.